The chain runs to 222 residues: Glutathione S-transferase A2 (222 aa).

A2 is subject to N-acetylalanine. Residues 3 to 83 enclose the GST N-terminal domain; sequence GKPVLHYFNA…YIATKYDLYG (81 aa). An N6-succinyllysine modification is found at K4. Glutathione contacts are provided by residues Y9, K45, 54 to 55, and 67 to 68; these read QV and QT. The region spanning 85–208 is the GST C-terminal domain; it reads DMKERALIDM…HPGSQRKPPL (124 aa).

Belongs to the GST superfamily. Alpha family. Homodimer. Heterodimer of GSTA1 and GSTA2. In terms of tissue distribution, expressed in the kidney.

It catalyses the reaction RX + glutathione = an S-substituted glutathione + a halide anion + H(+). Its function is as follows. Catalyzes the conjugation of glutathione to a large variety of electrophilic compounds. This chain is Glutathione S-transferase A2 (Gsta2), found in Mus musculus (Mouse).